The primary structure comprises 683 residues: U4/U6 small nuclear ribonucleoprotein Prp3 (683 aa).

In terms of domain architecture, PWI spans 1-87 (MALSKRELDE…HSKSSSDRSR (87 aa)). Positions 73–107 (GRSSRHSKSSSDRSRKRELKEVFGDDSEISKESSG) are enriched in basic and acidic residues. The segment at 73–135 (GRSSRHSKSS…IPGPPSESPG (63 aa)) is disordered. Residue Lys-139 forms a Glycyl lysine isopeptide (Lys-Gly) (interchain with G-Cter in SUMO2) linkage. Residues 161 to 183 (SFISPPAPQPKTPSSSQPERLPI) are disordered. Ser-164 carries the phosphoserine modification. Residues Lys-244 and Lys-252 each participate in a glycyl lysine isopeptide (Lys-Gly) (interchain with G-Cter in SUMO2) cross-link. Residues 416–550 (NLVEHPAQLN…VHISVYRVRN (135 aa)) form a mediates interaction with SART3 region. Residue Ser-619 is modified to Phosphoserine.

As to quaternary structure, component of the precatalytic spliceosome (spliceosome B complex). Component of the U4/U6-U5 tri-snRNP complex, a building block of the precatalytic spliceosome (spliceosome B complex). The U4/U6-U5 tri-snRNP complex is composed of the U4, U6 and U5 snRNAs and at least PRPF3, PRPF4, PRPF6, PRPF8, PRPF31, SNRNP200, TXNL4A, SNRNP40, SNRPB, SNRPD1, SNRPD2, SNRPD3, SNRPE, SNRPF, SNRPG, DDX23, CD2BP2, PPIH, SNU13, EFTUD2, SART1 and USP39, plus LSM2, LSM3, LSM4, LSM5, LSM6, LSM7 and LSM8. Interacts directly with PRPF4. Part of a heteromeric complex containing PPIH, PRPF3 and PRPF4 that is stable in the absence of RNA. Interacts with SART3; the interaction is direct and recruits the deubiquitinase USP4 to PRPF3. Interacts with PRPF19. Interacts ('Lys-63'-linked polyubiquitinated) with PRPF8 (via the MPN (JAB/Mov34) domain); may stabilize the U4/U6-U5 tri-snRNP complex. Interacts with ERCC6. Post-translationally, ubiquitinated. Undergoes 'Lys-63'-linked polyubiquitination by PRPF19 and deubiquitination by USP4. 'Lys-63'-linked ubiquitination increases the affinity for PRPF8 and may regulate the assembly of the U4/U6-U5 tri-snRNP complex.

Its subcellular location is the nucleus. It is found in the nucleus speckle. Plays a role in pre-mRNA splicing as component of the U4/U6-U5 tri-snRNP complex that is involved in spliceosome assembly, and as component of the precatalytic spliceosome (spliceosome B complex). The sequence is that of U4/U6 small nuclear ribonucleoprotein Prp3 (Prpf3) from Mus musculus (Mouse).